The chain runs to 127 residues: Fluoride-specific ion channel FluC (127 aa).

Transmembrane regions (helical) follow at residues 4-24, 36-56, 68-88, and 98-118; these read PILAIALGSTLGGLLRWGLGL, GTLVANLIAGYVVGVAIAFFA, LVITGFCGGLSTFSTFSAEIV, and WAMSAIAVHVAGSLIMTLAGI. 2 residues coordinate Na(+): Gly-75 and Ser-78.

Belongs to the fluoride channel Fluc/FEX (TC 1.A.43) family.

Its subcellular location is the cell inner membrane. It catalyses the reaction fluoride(in) = fluoride(out). Its activity is regulated as follows. Na(+) is not transported, but it plays an essential structural role and its presence is essential for fluoride channel function. In terms of biological role, fluoride-specific ion channel. Important for reducing fluoride concentration in the cell, thus reducing its toxicity. The protein is Fluoride-specific ion channel FluC of Nitrosomonas europaea (strain ATCC 19718 / CIP 103999 / KCTC 2705 / NBRC 14298).